The primary structure comprises 74 residues: Ubiquitin-like protein FUBI (74 aa).

Belongs to the ubiquitin family.

The protein is Ubiquitin-like protein FUBI (FAU) of Pongo abelii (Sumatran orangutan).